A 557-amino-acid polypeptide reads, in one-letter code: CTP synthase (557 aa).

The tract at residues 1–267 (MAKFVFVTGG…CREVLDVLDL (267 aa)) is amidoligase domain. Serine 13 is a binding site for CTP. Serine 13 is a UTP binding site. ATP contacts are provided by residues 14-19 (SIGKGI) and aspartate 71. Mg(2+) is bound by residues aspartate 71 and glutamate 141. CTP contacts are provided by residues 148–150 (DIE), 188–193 (KTKPTQ), and lysine 224. UTP-binding positions include 188-193 (KTKPTQ) and lysine 224. The region spanning 292 to 534 (KVALVGKYVQ…IEAAQQRLPC (243 aa)) is the Glutamine amidotransferase type-1 domain. Glycine 354 lines the L-glutamine pocket. Residue cysteine 381 is the Nucleophile; for glutamine hydrolysis of the active site. L-glutamine-binding positions include 382 to 385 (LGMQ), glutamate 405, and arginine 462. Residues histidine 507 and glutamate 509 contribute to the active site. A disordered region spans residues 532–557 (LPCSPSEAMRQQNNSAAGSSHPSLQP). Polar residues predominate over residues 540-557 (MRQQNNSAAGSSHPSLQP).

The protein belongs to the CTP synthase family. As to quaternary structure, homotetramer.

The catalysed reaction is UTP + L-glutamine + ATP + H2O = CTP + L-glutamate + ADP + phosphate + 2 H(+). It catalyses the reaction L-glutamine + H2O = L-glutamate + NH4(+). It carries out the reaction UTP + NH4(+) + ATP = CTP + ADP + phosphate + 2 H(+). Its pathway is pyrimidine metabolism; CTP biosynthesis via de novo pathway; CTP from UDP: step 2/2. Its activity is regulated as follows. Allosterically activated by GTP, when glutamine is the substrate; GTP has no effect on the reaction when ammonia is the substrate. The allosteric effector GTP functions by stabilizing the protein conformation that binds the tetrahedral intermediate(s) formed during glutamine hydrolysis. Inhibited by the product CTP, via allosteric rather than competitive inhibition. Functionally, catalyzes the ATP-dependent amination of UTP to CTP with either L-glutamine or ammonia as the source of nitrogen. Regulates intracellular CTP levels through interactions with the four ribonucleotide triphosphates. The protein is CTP synthase of Synechococcus sp. (strain CC9311).